The primary structure comprises 267 residues: 4-hydroxy-tetrahydrodipicolinate reductase (267 aa).

NAD(+) is bound by residues 8 to 13 and Asp34; that span reads GAAGRM. Arg35 contacts NADP(+). NAD(+)-binding positions include 98 to 100 and 122 to 125; these read GTT and AANF. Residue His155 is the Proton donor/acceptor of the active site. His156 serves as a coordination point for (S)-2,3,4,5-tetrahydrodipicolinate. The active-site Proton donor is the Lys159. 165–166 is a (S)-2,3,4,5-tetrahydrodipicolinate binding site; sequence GT.

It belongs to the DapB family.

The protein localises to the cytoplasm. The catalysed reaction is (S)-2,3,4,5-tetrahydrodipicolinate + NAD(+) + H2O = (2S,4S)-4-hydroxy-2,3,4,5-tetrahydrodipicolinate + NADH + H(+). It carries out the reaction (S)-2,3,4,5-tetrahydrodipicolinate + NADP(+) + H2O = (2S,4S)-4-hydroxy-2,3,4,5-tetrahydrodipicolinate + NADPH + H(+). It participates in amino-acid biosynthesis; L-lysine biosynthesis via DAP pathway; (S)-tetrahydrodipicolinate from L-aspartate: step 4/4. In terms of biological role, catalyzes the conversion of 4-hydroxy-tetrahydrodipicolinate (HTPA) to tetrahydrodipicolinate. The protein is 4-hydroxy-tetrahydrodipicolinate reductase of Pseudomonas putida (strain GB-1).